The following is a 907-amino-acid chain: Eukaryotic translation initiation factor 4 gamma 2 (907 aa).

N-acetylmethionine is present on Met-1. A disordered region spans residues 1–71 (MESAIAEGGA…SAANNSANEK (71 aa)). At Ser-11 the chain carries Phosphoserine. One can recognise an MIF4G domain in the interval 78 to 308 (FRKVRGILNK…QDTVELREHH (231 aa)). Thr-89 is subject to Phosphothreonine. At Arg-360 the chain carries Omega-N-methylarginine. Ser-395 is subject to Phosphoserine. At Lys-431 the chain carries N6-methyllysine. Ser-443 carries the phosphoserine modification. Positions 498-541 (PPSAQPPRTQTPPLGQTPQLGLKTNPPLIQEKPAKTSKKPPPSK) are disordered. A compositionally biased stretch (polar residues) spans 503-516 (PPRTQTPPLGQTPQ). An Omega-N-methylarginine modification is found at Arg-505. Residues Thr-508 and Thr-514 each carry the phosphothreonine modification. The MI domain maps to 543–666 (ELLKLTETVV…SISELAQPLE (124 aa)). A Glycyl lysine isopeptide (Lys-Gly) (interchain with G-Cter in SUMO2) cross-link involves residue Lys-575. The 185-residue stretch at 720-904 (EGKGLSFLFP…ETAEEEESEE (185 aa)) folds into the W2 domain. A Phosphoserine modification is found at Ser-902.

This sequence belongs to the eukaryotic initiation factor 4G family. As to quaternary structure, interacts with the serine/threonine protein kinases MKNK1 and MKNK2. Binds EIF4A and EIF3. Interacts with MIF4GD. Interacts with DAZAP2. Post-translationally, phosphorylation; hyperphosphorylated during mitosis.

Appears to play a role in the switch from cap-dependent to IRES-mediated translation during mitosis, apoptosis and viral infection. Cleaved by some caspases and viral proteases. In Oryctolagus cuniculus (Rabbit), this protein is Eukaryotic translation initiation factor 4 gamma 2.